A 290-amino-acid polypeptide reads, in one-letter code: PIH1 domain-containing protein 1 (290 aa).

Phosphoserine occurs at positions 12 and 173.

The protein belongs to the PIH1 family. Component of the R2TP complex composed at least of RUVBL1, RUVBL2, RPAP3 and PIHD1. Component of the PAQosome complex which is responsible for the biogenesis of several protein complexes and which consists of R2TP complex members RUVBL1, RUVBL2, RPAP3 and PIH1D1, URI complex members PFDN2, PFDN6, PDRG1, UXT and URI1 as well as ASDURF, POLR2E and DNAAF10/WDR92. Interacts with phosphorylated TELO2 and mediates interaction of TELO2 with the R2TP complex. Interacts with phosphorylated ECD, EFTUD2/SNRP116, RPB1 and UBR5 and with RPB1 in a phosphorylation-independent manner. Interacts with the core C/D box snoRNP particle components NOP58 and FBL and with RUVBL1/TIP49. Interacts with RPAP3 and DNAAF10. Interacts with histone H4 and with SWI/SNF complex member SMARCB1/SNF5. Interacts with the mTORC1 complex member RPTOR. Interacts with MSL1. Expressed at low levels in normal mammary epithelial cells (at protein level). Highest expression in lung, leukocyte and placenta. Expressed at lower levels in brain, prostate, colon, heart, small intestine, liver, ovary, pancreas, skeletal muscle, spleen, testis and thymus.

The protein resides in the nucleus. In terms of biological role, involved in the assembly of C/D box small nucleolar ribonucleoprotein (snoRNP) particles. Recruits the SWI/SNF complex to the core promoter of rRNA genes and enhances pre-rRNA transcription. Mediates interaction of TELO2 with the R2TP complex which is necessary for the stability of MTOR and SMG1. Positively regulates the assembly and activity of the mTORC1 complex. The chain is PIH1 domain-containing protein 1 (PIH1D1) from Homo sapiens (Human).